Here is a 277-residue protein sequence, read N- to C-terminus: MALKTYNPTTPGQRQLVMVDRSALYKGKPVKTLTEGKRGKGGRNNTGRITVRFRGGGHKQAYRNVDFKRGKTDVPAVVERLEYDPNRTAFIALIKYQDGEQAYILAPQRMAVGDTVVAGNYVDVKPGNVMPLGNMPVGTIVHNVEMKIGKGGQLARSAGTYAQIVGRDQDYVILRLNSGEQRLVHGRCRGAIGAVSNPDHMNTSVGKAGRTRWMGRRPHNRGVVMNPIDHPHGGGEGRTSGGRHPVTPWGKPTKGKKTRSNKSTNKFILISRHKRKK.

Positions 199-277 (DHMNTSVGKA…ILISRHKRKK (79 aa)) are disordered. Over residues 209-220 (GRTRWMGRRPHN) the composition is skewed to basic residues.

Belongs to the universal ribosomal protein uL2 family. As to quaternary structure, part of the 50S ribosomal subunit. Forms a bridge to the 30S subunit in the 70S ribosome.

Its function is as follows. One of the primary rRNA binding proteins. Required for association of the 30S and 50S subunits to form the 70S ribosome, for tRNA binding and peptide bond formation. It has been suggested to have peptidyltransferase activity; this is somewhat controversial. Makes several contacts with the 16S rRNA in the 70S ribosome. The chain is Large ribosomal subunit protein uL2 from Nitrobacter winogradskyi (strain ATCC 25391 / DSM 10237 / CIP 104748 / NCIMB 11846 / Nb-255).